The sequence spans 313 residues: E3 ubiquitin-protein ligase SGIP1 (313 aa).

Residues 16–65 enclose the F-box domain; the sequence is REYSKEIPIDLLIEIFSRLSTGDIARCRCVSKIWSSVPRLRDFTELFLKI.

In terms of assembly, interacts with SGS3 in cytoplasmic granules.

It is found in the cytoplasmic granule. It catalyses the reaction S-ubiquitinyl-[E2 ubiquitin-conjugating enzyme]-L-cysteine + [acceptor protein]-L-lysine = [E2 ubiquitin-conjugating enzyme]-L-cysteine + N(6)-ubiquitinyl-[acceptor protein]-L-lysine.. It participates in protein degradation; proteasomal ubiquitin-dependent pathway. It functions in the pathway protein modification; protein ubiquitination. In terms of biological role, E3 ubiquitin-protein ligase which triggers the ubiquitination and subsequent degradation of SGS3 in response to heat. Involved in the mechanisms necessary for quick response to heat and subsequent heritable transgenerational memory of heat acclimation (global warming) such as early flowering and attenuated immunity; this process includes epigenetic regulation as well as post-transcriptional gene silencing (PTGS). In response to heat, HSFA2 is activated and promotes the expression of REF6 which in turn derepresses HSFA2, thus establishing an inheritable feedback loop able to trigger SGIP1 and subsequent SGIP1-mediated SGS3 degradation; this prevents the biosynthesis of trans-acting siRNA (tasiRNA) and leads to the release of HTT5, which drives early flowering but attenuates immunity. In Arabidopsis thaliana (Mouse-ear cress), this protein is E3 ubiquitin-protein ligase SGIP1.